Consider the following 588-residue polypeptide: CD166 antigen (588 aa).

Residues 1-33 form the signal peptide; that stretch reads MMEPPAAAARASCRRRPLLCLLLAALCMPPALG. Ig-like V-type domains follow at residues 34–126 and 131–240; these read LYTV…TEDD and PTVV…KTIQ. The Extracellular portion of the chain corresponds to 34 to 532; it reads LYTVNAVYGD…NSEKVNDQAK (499 aa). Intrachain disulfides connect cysteine 49/cysteine 119 and cysteine 163/cysteine 226. N-linked (GlcNAc...) asparagine glycans are attached at residues asparagine 101, asparagine 173, asparagine 199, asparagine 271, asparagine 312, asparagine 366, asparagine 462, asparagine 485, and asparagine 504. 3 Ig-like C2-type domains span residues 251 to 333, 338 to 414, and 421 to 501; these read PTEK…TTIT, DLQL…KTLK, and PQIK…RTVT. Intrachain disulfides connect cysteine 276-cysteine 319, cysteine 359-cysteine 397, and cysteine 440-cysteine 490. A helical membrane pass occupies residues 533–553; it reads LIVGIVVGLLLVALVAGVVYW. Residues 554 to 588 lie on the Cytoplasmic side of the membrane; sequence LYVKKSKTASKHVDKDLGNIEENKKLEENNHKSET.

As to quaternary structure, homodimer. Interacts (via extracellular domain) with CD6 (via extracellular domain). Homodimerization and interaction with CD6 involve the same region and cannot occur simultaneously. The affinity for CD6 is much higher than the affinity for self-association. In terms of processing, glycosylated. As to expression, detected in embryo. Detected in embryonic spinal cord and embryonic brain. Within the spinal cord it is localized to axons in the dorsal funiculus, midline floor plate cells, and motoneurons. Detected in embryonic epithelia and brain. After hatching, detected in bursa of Fabricius and thymus. Detected on embryonic retinal ganglion cell axon growth cones (at protein level). Detected in embryonic retina and in the optic fiber layer, which is composed of retinal ganglion cell axons and their growth cones.

Its subcellular location is the cell membrane. The protein resides in the cell projection. It localises to the axon. The protein localises to the dendrite. Cell adhesion molecule that mediates both heterotypic cell-cell contacts via its interaction with CD6, as well as homotypic cell-cell contacts. Promotes T-cell activation and proliferation via its interactions with CD6. Contributes to the formation and maturation of the immunological synapse via its interactions with CD6. Mediates homotypic interactions with cells that express ALCAM. Mediates attachment of dendritic cells onto endothelial cells via homotypic interaction. Inhibits endothelial cell migration and promotes endothelial tube formation via homotypic interactions. Required for normal organization of the lymph vessel network. Required for normal hematopoietic stem cell engraftment in the bone marrow. Plays a role in hematopoiesis; required for normal numbers of hematopoietic stem cells in bone marrow. Promotes in vitro osteoblast proliferation and differentiation. Promotes neurite extension, axon growth and axon guidance; axons grow preferentially on surfaces that contain ALCAM. Mediates outgrowth and pathfinding for retinal ganglion cell axons. This Gallus gallus (Chicken) protein is CD166 antigen (ALCAM).